The sequence spans 302 residues: Oxygen-dependent coproporphyrinogen-III oxidase (302 aa).

Serine 94 is a binding site for substrate. A divalent metal cation is bound by residues histidine 98 and histidine 108. Residue histidine 108 is the Proton donor of the active site. 110–112 (NVR) contributes to the substrate binding site. The a divalent metal cation site is built by histidine 147 and histidine 177. Residues 242-277 (YVEFNLVYDRGTLFGLQTGGRTESILMSMPPLVRWQ) are important for dimerization. Residue 260–262 (GGR) coordinates substrate.

This sequence belongs to the aerobic coproporphyrinogen-III oxidase family. As to quaternary structure, homodimer. A divalent metal cation is required as a cofactor.

The protein localises to the cytoplasm. The enzyme catalyses coproporphyrinogen III + O2 + 2 H(+) = protoporphyrinogen IX + 2 CO2 + 2 H2O. Its pathway is porphyrin-containing compound metabolism; protoporphyrin-IX biosynthesis; protoporphyrinogen-IX from coproporphyrinogen-III (O2 route): step 1/1. Its function is as follows. Involved in the heme biosynthesis. Catalyzes the aerobic oxidative decarboxylation of propionate groups of rings A and B of coproporphyrinogen-III to yield the vinyl groups in protoporphyrinogen-IX. The sequence is that of Oxygen-dependent coproporphyrinogen-III oxidase from Shewanella sp. (strain ANA-3).